A 309-amino-acid chain; its full sequence is Probable manganese-dependent inorganic pyrophosphatase (309 aa).

6 residues coordinate Mn(2+): histidine 9, aspartate 13, aspartate 15, aspartate 75, histidine 97, and aspartate 149.

Belongs to the PPase class C family. Requires Mn(2+) as cofactor.

The protein localises to the cytoplasm. It catalyses the reaction diphosphate + H2O = 2 phosphate + H(+). The polypeptide is Probable manganese-dependent inorganic pyrophosphatase (Bacillus licheniformis (strain ATCC 14580 / DSM 13 / JCM 2505 / CCUG 7422 / NBRC 12200 / NCIMB 9375 / NCTC 10341 / NRRL NRS-1264 / Gibson 46)).